Reading from the N-terminus, the 115-residue chain is Nitrogenase-stabilizing/protective protein NifW (115 aa).

Belongs to the NifW family. Homotrimer; associates with NifD.

Functionally, may protect the nitrogenase Fe-Mo protein from oxidative damage. The protein is Nitrogenase-stabilizing/protective protein NifW of Azotobacter vinelandii (strain DJ / ATCC BAA-1303).